Reading from the N-terminus, the 277-residue chain is MPAYSTVRVGKKYSPSFKVYVTQDGKIVSPFHDIPLYMSGNREIVSVVNEIPRFENGKFEINKEEAFNPIKQDIKKGWPRFVKNVFPMKGYLWNYGALPQTWENPHEVDRHTGARGDNDPLDVIEIGRKRKEVGEVYQAKVLGSIALVDEGECDWKVVVIDVNDEKAKEINDIEDVRKVYEGLLEQTIFWFKNYKVPDGKPKNNFALDGKYMDKKFTVGIIKSAYENWCGMINSKSDTNICKENSTLMDKVDSPAIIQEDLSDEEVPECVHQFEFIK.

Arg80 contributes to the diphosphate binding site. Mg(2+) contacts are provided by Asp117, Asp122, and Asp154.

It belongs to the PPase family. The cofactor is Mg(2+).

The protein resides in the cytoplasm. It carries out the reaction diphosphate + H2O = 2 phosphate + H(+). In terms of biological role, involved in osmoadaptation. In Encephalitozoon cuniculi (strain GB-M1) (Microsporidian parasite), this protein is Inorganic pyrophosphatase (IPP1).